Here is a 107-residue protein sequence, read N- to C-terminus: Iron-binding protein IscA (107 aa).

3 residues coordinate Fe cation: cysteine 35, cysteine 99, and cysteine 101.

The protein belongs to the HesB/IscA family. In terms of assembly, homodimer; may form tetramers and higher multimers. The cofactor is Fe cation.

In terms of biological role, is able to transfer iron-sulfur clusters to apo-ferredoxin. Multiple cycles of [2Fe2S] cluster formation and transfer are observed, suggesting that IscA acts catalytically. Recruits intracellular free iron so as to provide iron for the assembly of transient iron-sulfur cluster in IscU in the presence of IscS, L-cysteine and the thioredoxin reductase system TrxA/TrxB. The polypeptide is Iron-binding protein IscA (Serratia proteamaculans (strain 568)).